Reading from the N-terminus, the 290-residue chain is Ribosomal RNA small subunit methyltransferase A (290 aa).

S-adenosyl-L-methionine-binding residues include asparagine 27, leucine 29, glycine 54, glutamate 75, aspartate 100, and asparagine 125.

This sequence belongs to the class I-like SAM-binding methyltransferase superfamily. rRNA adenine N(6)-methyltransferase family. RsmA subfamily.

The protein resides in the cytoplasm. It carries out the reaction adenosine(1518)/adenosine(1519) in 16S rRNA + 4 S-adenosyl-L-methionine = N(6)-dimethyladenosine(1518)/N(6)-dimethyladenosine(1519) in 16S rRNA + 4 S-adenosyl-L-homocysteine + 4 H(+). In terms of biological role, specifically dimethylates two adjacent adenosines (A1518 and A1519) in the loop of a conserved hairpin near the 3'-end of 16S rRNA in the 30S particle. May play a critical role in biogenesis of 30S subunits. The polypeptide is Ribosomal RNA small subunit methyltransferase A (Streptococcus pneumoniae (strain ATCC BAA-255 / R6)).